The chain runs to 217 residues: Octanoyltransferase (217 aa).

A BPL/LPL catalytic domain is found at 30–209 (GNRPPTLLLL…AFAEVFGLRP (180 aa)). Substrate is bound by residues 75-82 (RGGDVTYH), 139-141 (AIG), and 152-154 (GFA). Cysteine 170 functions as the Acyl-thioester intermediate in the catalytic mechanism.

This sequence belongs to the LipB family.

Its subcellular location is the cytoplasm. The enzyme catalyses octanoyl-[ACP] + L-lysyl-[protein] = N(6)-octanoyl-L-lysyl-[protein] + holo-[ACP] + H(+). It functions in the pathway protein modification; protein lipoylation via endogenous pathway; protein N(6)-(lipoyl)lysine from octanoyl-[acyl-carrier-protein]: step 1/2. Catalyzes the transfer of endogenously produced octanoic acid from octanoyl-acyl-carrier-protein onto the lipoyl domains of lipoate-dependent enzymes. Lipoyl-ACP can also act as a substrate although octanoyl-ACP is likely to be the physiological substrate. In Thermus thermophilus (strain ATCC 27634 / DSM 579 / HB8), this protein is Octanoyltransferase.